The primary structure comprises 333 residues: HTH-type transcriptional regulator CbbR (333 aa).

An HTH lysR-type domain is found at 5-62 (WTLRQLRLVALAAASGSYAKAAQDMGLSPPAVTAQMKALEEDIGVPMFERVDGRLRPT). The H-T-H motif DNA-binding region spans 22–41 (YAKAAQDMGLSPPAVTAQMK).

This sequence belongs to the LysR transcriptional regulatory family.

Functionally, transcriptional activator for the cbb operon (cbbLSXFP) for RuBisCO and other Calvin cycle genes. Binds specifically to two binding sites in the cbbR-cbbL intergenic region. The sequence is that of HTH-type transcriptional regulator CbbR (cbbR) from Xanthobacter flavus.